The primary structure comprises 198 residues: MSTVDLARVGACILKHAVTGEAVELRSLWREHACVVAGLRRFGCVVCRWIAQDLSSLAGLLDQHGVRLVGVGPEALGLQEFLDGDYFAGELYLDESKQLYKELGFKRYNSLSILPAALGKPVRDVAAKAKAVGIQGNLSGDLLQSGGLLVVSKGGDKVLLHFVQKSPGDYVPKEHILQVLGISAEVCASDPPQCDREV.

Tyr108 is subject to Phosphotyrosine.

The protein belongs to the peroxiredoxin-like PRXL2 family. Prostamide/prostaglandin F synthase subfamily.

It is found in the cytoplasm. Its subcellular location is the cytosol. The enzyme catalyses prostaglandin H2 + [thioredoxin]-dithiol = prostaglandin F2alpha + [thioredoxin]-disulfide. It carries out the reaction prostamide F2alpha + [thioredoxin]-disulfide = prostamide H2 + [thioredoxin]-dithiol. Its function is as follows. Catalyzes the reduction of prostaglandin-ethanolamide H(2) (prostamide H(2)) to prostamide F(2alpha) with NADPH as proton donor. Also able to reduce prostaglandin H(2) to prostaglandin F(2alpha). The chain is Prostamide/prostaglandin F synthase from Homo sapiens (Human).